We begin with the raw amino-acid sequence, 158 residues long: SsrA-binding protein (158 aa).

It belongs to the SmpB family.

Its subcellular location is the cytoplasm. In terms of biological role, required for rescue of stalled ribosomes mediated by trans-translation. Binds to transfer-messenger RNA (tmRNA), required for stable association of tmRNA with ribosomes. tmRNA and SmpB together mimic tRNA shape, replacing the anticodon stem-loop with SmpB. tmRNA is encoded by the ssrA gene; the 2 termini fold to resemble tRNA(Ala) and it encodes a 'tag peptide', a short internal open reading frame. During trans-translation Ala-aminoacylated tmRNA acts like a tRNA, entering the A-site of stalled ribosomes, displacing the stalled mRNA. The ribosome then switches to translate the ORF on the tmRNA; the nascent peptide is terminated with the 'tag peptide' encoded by the tmRNA and targeted for degradation. The ribosome is freed to recommence translation, which seems to be the essential function of trans-translation. This chain is SsrA-binding protein, found in Caldanaerobacter subterraneus subsp. tengcongensis (strain DSM 15242 / JCM 11007 / NBRC 100824 / MB4) (Thermoanaerobacter tengcongensis).